Reading from the N-terminus, the 276-residue chain is MIVIGRSIVHPYITNEYEPFAAEKQQILSIMAGNQEVYSFRTADELSFDLNLRVNIIISALELFQSGFQFRTFQQSFCNPQYWKRTSLGGFELLPNIPPSIAIQDIFKNGKLYGTECATAMIIIFYKALLSLYEEETFNRLFANLLLYTWDYDQDLRLITKNGGDLVPGDLVYFKNPQVNPATIEWQGENTIYLGNFFFYGHGVGVKTKEEIIYSLNERRVPYAFISAFLTDTITRIDSRIMSQYASSSTPQTSISFIPIRDDAIVATVGHTTTIY.

This sequence belongs to the bacillus TGase family.

The catalysed reaction is L-glutaminyl-[protein] + L-lysyl-[protein] = [protein]-L-lysyl-N(6)-5-L-glutamyl-[protein] + NH4(+). In terms of biological role, probably plays a role in the assembly of the spore coat proteins by catalyzing epsilon-(gamma-glutamyl)lysine cross-links. This is Protein-glutamine gamma-glutamyltransferase from Bacillus cereus (strain B4264).